Reading from the N-terminus, the 469-residue chain is Acetyl-CoA decarbonylase/synthase complex subunit beta 1 (469 aa).

The [Ni-Fe-S] cluster site is built by Cys-189, Cys-192, Cys-278, and Cys-280.

It belongs to the CdhC family. Monomer. The ACDS complex is made up of alpha, epsilon, beta, gamma and delta chains with a probable stoichiometry of (alpha(2)epsilon(2))(4)-beta(8)-(gamma(1)delta(1))(8) (Potential). Requires [Ni-Fe-S] cluster as cofactor.

The enzyme catalyses Co(I)-[corrinoid Fe-S protein] + acetyl-CoA + H(+) = methyl-Co(III)-[corrinoid Fe-S protein] + CO + CoA. Its pathway is one-carbon metabolism; methanogenesis from acetate. Its function is as follows. Part of a complex that catalyzes the reversible cleavage of acetyl-CoA, allowing growth on acetate as sole source of carbon and energy. The alpha-epsilon complex generates CO from CO(2), while the beta subunit (this protein) combines the CO with CoA and a methyl group to form acetyl-CoA. The methyl group, which is incorporated into acetyl-CoA, is transferred to the beta subunit by a corrinoid iron-sulfur protein (the gamma-delta complex). In Methanosarcina acetivorans (strain ATCC 35395 / DSM 2834 / JCM 12185 / C2A), this protein is Acetyl-CoA decarbonylase/synthase complex subunit beta 1 (cdhC1).